The sequence spans 293 residues: uncharacterized protein (293 aa).

An HTH lysR-type domain is found at 1–60; sequence MHITLRQLEVFAEVLKSGSTTQASVMLALSQSAVSAALTDLEGQLGVQLFDRVGKRLVVN. Positions 20 to 39 form a DNA-binding region, H-T-H motif; sequence TTQASVMLALSQSAVSAALT.

The protein belongs to the LysR transcriptional regulatory family.

This is an uncharacterized protein from Escherichia coli O157:H7.